A 420-amino-acid chain; its full sequence is Protein ECERIFERUM 26-like (420 aa).

This sequence belongs to the plant acyltransferase family. Highly expressed in flowers. Expressed in leaves.

In terms of biological role, involved in biosynthesis of the epicuticular wax. Plays a role in very-long-chain fatty acid (VLCFA) biosynthesis and is required for VLCFA elongation in leaf. Despite its classification as a BAHD acyltransferase based on sequence homology, CER26L does not seem to share the catalytic mechanism of the members of the BAHD family. The sequence is that of Protein ECERIFERUM 26-like (CER26L) from Arabidopsis thaliana (Mouse-ear cress).